The primary structure comprises 585 residues: Frizzled-5 (585 aa).

The signal sequence occupies residues 1–26 (MARPDPSAPPSLLLLLLAQLVGRAAA). Over 27–238 (ASKAPVCQEI…PDERTFATFW (212 aa)) the chain is Extracellular. The 123-residue stretch at 28–150 (SKAPVCQEIT…GDAEVLCMDY (123 aa)) folds into the FZ domain. Cystine bridges form between C33/C94, C41/C87, C78/C116, C105/C147, and C109/C133. N-linked (GlcNAc...) asparagine glycosylation is present at N47. N-linked (GlcNAc...) asparagine glycosylation occurs at N151. Residues 156-182 (TTASPKSFPAKPTLPGPPGAPSSGGEC) form a disordered region. The helical transmembrane segment at 239-259 (IGLWSVLCFISTSTTVATFLI) threads the bilayer. Residues 260–270 (DMERFRYPERP) are Cytoplasmic-facing. The helical transmembrane segment at 271–291 (IIFLSACYLCVSLGFLVRLVV) threads the bilayer. Topologically, residues 292 to 315 (GHASVACSREHSHIHYETTGPALC) are extracellular. The chain crosses the membrane as a helical span at residues 316-336 (TVVFLLVYFFGMASSIWWVIL). Over 337–358 (SLTWFLAAGMKWGNEAIAGYAQ) the chain is Cytoplasmic. The helical transmembrane segment at 359–379 (YFHLAAWLIPSVKSITALALS) threads the bilayer. The Extracellular segment spans residues 380-402 (SVDGDPVAGVCYVGNQNLNSLRG). The chain crosses the membrane as a helical span at residues 403-423 (FVLGPLVLYLLVGTLFLLAGF). Topologically, residues 424–449 (VSLFRIRSVIKQGGTKTDKLEKLMIR) are cytoplasmic. A helical membrane pass occupies residues 450-470 (IGIFTLLYTVPASIVVACYLY). Residues 471–500 (EQHYRESWEAALTCACPGSDAGQPRAKPEY) lie on the Extracellular side of the membrane. The helical transmembrane segment at 501 to 521 (WVLMLKYFMCLVVGITSGVWI) threads the bilayer. Over 522 to 585 (WSGKTLESWR…YHKQVSLSHV (64 aa)) the chain is Cytoplasmic. The Lys-Thr-X-X-X-Trp motif, mediates interaction with the PDZ domain of Dvl family members signature appears at 525–530 (KTLESW). The PDZ-binding signature appears at 583–585 (SHV).

This sequence belongs to the G-protein coupled receptor Fz/Smo family. Binding of unsaturated fatty acid molecules (via FZ domain) promotes homodimerization (via FZ domain). Interacts with WNT2B. Interacts with WNT7A. Interacts with GOPC. In terms of processing, ubiquitinated by RNF43 and ZNRF3, leading to its degradation by the proteasome.

It localises to the cell membrane. It is found in the golgi apparatus membrane. The protein localises to the synapse. The protein resides in the perikaryon. Its subcellular location is the cell projection. It localises to the dendrite. It is found in the axon. Functionally, receptor for Wnt proteins. Functions in the canonical Wnt/beta-catenin signaling pathway. In vitro activates WNT2, WNT10B, WNT5A, but not WNT2B or WNT4 signaling. In neurons, activation by WNT7A promotes formation of synapses. May be involved in transduction and intercellular transmission of polarity information during tissue morphogenesis and/or in differentiated tissues. Plays a role in yolk sac angiogenesis and in placental vascularization. Plays a role in ocular development. In Rattus norvegicus (Rat), this protein is Frizzled-5 (Fzd5).